Reading from the N-terminus, the 218-residue chain is MNLVGSYAHHHHHHHHHHPHPAHPMLHEPFLFGPASRCHQERPYFQSWLLSPADAAPDFPAGGPPPAAAAAAASYGPDARPGQSPGRLEALGGRLGRRKGSGPKKERRRTESINSAFAELRECIPNVPADTKLSKIKTLRLATSYIAYLMDVLAKDAQAGDPEAFKAELKKADGGRESKRKRELQQHEGFPPALGPGEKRIKGRTGWPQQVWALELNQ.

Disordered regions lie at residues 1–23 (MNLV…HPAH), 56–112 (APDF…RTES), and 172–203 (ADGG…RIKG). Residues 8–21 (AHHHHHHHHHHPHP) show a composition bias toward basic residues. The span at 68-92 (AAAAAASYGPDARPGQSPGRLEALG) shows a compositional bias: low complexity. The span at 95–107 (LGRRKGSGPKKER) shows a compositional bias: basic residues. Residues 97 to 149 (RRKGSGPKKERRRTESINSAFAELRECIPNVPADTKLSKIKTLRLATSYIAYL) form the bHLH domain. Residue threonine 110 is modified to Phosphothreonine; by PLK4. Phosphoserine; by PLK4 is present on serine 112.

Efficient DNA binding requires dimerization with another bHLH protein. Forms homodimers and heterodimers with TCF3 gene products E12 and E47, HAND2 and HEY1, HEY2 and HEYL (hairy-related transcription factors). Interacts with MDFIC. Interacts with SOX15; the interaction enhances HAND1-induced differentiation of trophoblast giant cells. Phosphorylation by PLK4 disrupts the interaction with MDFIC and leads to translocation into the nucleoplasm, allowing dimerization and transcription factor activity.

It localises to the nucleus. The protein localises to the nucleoplasm. Its subcellular location is the nucleolus. Functionally, transcription factor that plays an essential role in both trophoblast giant cell differentiation and in cardiac morphogenesis. Binds the DNA sequence 5'-NRTCTG-3' (non-canonical E-box). Acts as a transcriptional repressor of SOX15. In the adult, could be required for ongoing expression of cardiac-specific genes. This is Heart- and neural crest derivatives-expressed protein 1 (HAND1) from Bos taurus (Bovine).